The primary structure comprises 387 residues: MGLAKETTMGGRGRVAKVEVQGKKPLSRVPNTKPPFTVGQLKKAIPPHCFQRSLLTSFSYVVYDLSFAFIFYIATTYFHLLPQPFSLIAWPIYWVLQGCLLTGVWVIAHECGHHAFSKYQWVDDVVGLTLHSTLLVPYFSWKISHRRHHSNTGSLDRDEVFVPKPKSKVAWFSKYLNNPLGRAVSLLVTLTIGWPMYLAFNVSGRPYDSFASHYHPYAPIYSNRERLLIYVSDVALFSVTYSLYRVATLKGLVWLLCVYGVPLLIVNGFLVTITYLQHTHFALPHYDSSEWDWLKGALATMDRDYGILNKVFHHITDTHVAHHLFSTMPHYHAMEATNAIKPILGEYYQFDDTPFYKALWREARECLYVEPDEGTSEKGVYWYRNKY.

A run of 2 helical transmembrane segments spans residues 54–74 (LLTS…FYIA) and 87–107 (LIAW…VWVI). Positions 109–113 (HECGH) match the Histidine box-1 motif. A helical transmembrane segment spans residues 121 to 141 (WVDDVVGLTLHSTLLVPYFSW). The short motif at 145–149 (HRRHH) is the Histidine box-2 element. The next 3 membrane-spanning stretches (helical) occupy residues 183–203 (AVSL…FNVS), 227–247 (LLIY…YRVA), and 251–271 (GLVW…GFLV). A Histidine box-3 motif is present at residues 319 to 323 (HVAHH).

It belongs to the fatty acid desaturase type 1 family. As to expression, strongly expressed in developing seeds.

The protein resides in the endoplasmic reticulum membrane. It participates in lipid metabolism; polyunsaturated fatty acid biosynthesis. ER (microsomal) omega-6 fatty acid desaturase introduces the second double bond in the biosynthesis of 18:3 fatty acids, important constituents of plant membranes. It is thought to use cytochrome b5 as an electron donor and to act on fatty acids esterified to phosphatidylcholine and, possibly, other phospholipids. In Glycine max (Soybean), this protein is Omega-6 fatty acid desaturase, endoplasmic reticulum isozyme 1 (FAD2-1).